The chain runs to 264 residues: Undecaprenyl-diphosphatase (264 aa).

The next 8 membrane-spanning stretches (helical) occupy residues M1–I21, Q39–F59, S83–F103, S113–L133, M143–V163, A184–I204, L220–I240, and I243–F263.

It belongs to the UppP family.

It localises to the cell inner membrane. The catalysed reaction is di-trans,octa-cis-undecaprenyl diphosphate + H2O = di-trans,octa-cis-undecaprenyl phosphate + phosphate + H(+). Catalyzes the dephosphorylation of undecaprenyl diphosphate (UPP). Confers resistance to bacitracin. The polypeptide is Undecaprenyl-diphosphatase (Campylobacter concisus (strain 13826)).